A 236-amino-acid chain; its full sequence is Uridylate kinase (236 aa).

10–13 (KLSG) is an ATP binding site. G52 contributes to the UMP binding site. G53 and R57 together coordinate ATP. UMP contacts are provided by residues D72 and 133 to 140 (TGNPFFTT). ATP-binding residues include T160, Y166, and D169.

This sequence belongs to the UMP kinase family. In terms of assembly, homohexamer.

The protein localises to the cytoplasm. The enzyme catalyses UMP + ATP = UDP + ADP. Its pathway is pyrimidine metabolism; CTP biosynthesis via de novo pathway; UDP from UMP (UMPK route): step 1/1. With respect to regulation, inhibited by UTP. In terms of biological role, catalyzes the reversible phosphorylation of UMP to UDP. The chain is Uridylate kinase from Cupriavidus metallidurans (strain ATCC 43123 / DSM 2839 / NBRC 102507 / CH34) (Ralstonia metallidurans).